Reading from the N-terminus, the 480-residue chain is Reticulophagy regulator 1 (480 aa).

A compositionally biased stretch (basic and acidic residues) spans 1–10 (MASPAPEEHA). The tract at residues 1–41 (MASPAPEEHATQGCPATEEQEPRPGVPGEEAGPEGAGPQVE) is disordered. Over 1-43 (MASPAPEEHATQGCPATEEQEPRPGVPGEEAGPEGAGPQVEEA) the chain is Cytoplasmic. The helical transmembrane segment at 44–64 (AGRVAAALTWLLGEPVLWLGW) threads the bilayer. Residues 65-78 (RADELLSWKRPLRS) are Lumenal-facing. The reticulon homology domain stretch occupies residues 67 to 216 (DELLSWKRPL…LLFAFLCPLF (150 aa)). The helical transmembrane segment at 79 to 99 (LLAFLGANLLFWFLALTPWRV) threads the bilayer. Residues 100-101 (YH) lie on the Cytoplasmic side of the membrane. The helical transmembrane segment at 102 to 122 (LISVMILGRVIMQIIKDMVLS) threads the bilayer. At 123–191 (RARGAQLWRS…LVCSVCTFFT (69 aa)) the chain is on the lumenal side. Serine 132 carries the phosphoserine modification. Serine 134 carries the post-translational modification Phosphoserine; by CAMK2B. Phosphoserine is present on serine 136. Residues 192–212 (ILGSYIPGVILSYLLLLFAFL) form a helical membrane-spanning segment. Residues 213-480 (CPLFKCNDIG…GFLSNLLGGH (268 aa)) lie on the Cytoplasmic side of the membrane. Residues 302 to 313 (FNLSEGYTPQTD) show a composition bias toward polar residues. The tract at residues 302–348 (FNLSEGYTPQTDTSDDLDRPSEEVFSRDLSDFPSLENGAGTNDEDEL) is disordered. Over residues 317-331 (DLDRPSEEVFSRDLS) the composition is skewed to basic and acidic residues. The LIR motif signature appears at 436–441 (DDFELL). The tract at residues 450–480 (ESELGLTQDQGAEAQQSKKSSGFLSNLLGGH) is disordered. The segment covering 454–473 (GLTQDQGAEAQQSKKSSGFL) has biased composition (polar residues).

This sequence belongs to the RETREG family. Homooligomer; oligomerization is enhanced following endoplasmic reticulum stress and is mediated by the reticulon homology domain. Interacts with ATG8 family modifier proteins MAP1LC3A, MAP1LC3B, GABARAP, GABARAPL1 and GABARAPL2. Phosphorylation at Ser-134 by CAMK2B enhances oligomerization and membrane scission and reticulophagy activity.

The protein resides in the golgi apparatus. The protein localises to the cis-Golgi network membrane. Its subcellular location is the endoplasmic reticulum membrane. Its function is as follows. Endoplasmic reticulum (ER)-anchored autophagy regulator which mediates ER delivery into lysosomes through sequestration into autophagosomes. Promotes membrane remodeling and ER scission via its membrane bending capacity and targets the fragments into autophagosomes via interaction with ATG8 family proteins. Active under basal conditions. Required for collagen quality control in a LIR motif-dependent manner. Required for long-term survival of nociceptive and autonomic ganglion neurons. This chain is Reticulophagy regulator 1, found in Rattus norvegicus (Rat).